We begin with the raw amino-acid sequence, 417 residues long: Snake venom metalloproteinase kistomin (417 aa).

Residues 1–20 form the signal peptide; the sequence is MIEVLLVTICLAAFPYQGSS. A propeptide spanning residues 21-189 is cleaved from the precursor; that stretch reads IILESGNVND…KKPFRLNLTP (169 aa). The region spanning 197–391 is the Peptidase M12B domain; the sequence is AKVYLVIVAD…RKPECLFKKP (195 aa). 3 disulfides stabilise this stretch: Cys-308–Cys-386, Cys-348–Cys-370, and Cys-350–Cys-353. His-333 contacts Zn(2+). The active site involves Glu-334. Zn(2+) is bound by residues His-337 and His-343. Residues 392–417 constitute a propeptide that is removed on maturation; it reads LRTDTVSTPVSGNEPLEVITMDDFYA.

It belongs to the venom metalloproteinase (M12B) family. P-I subfamily. As to quaternary structure, monomer. Zn(2+) serves as cofactor. In terms of tissue distribution, expressed by the venom gland.

Its subcellular location is the secreted. Inhibited by EDTA, and O-phenanthrolene. Its function is as follows. Snake venom zinc metalloprotease that inhibits platelet aggregation by binding specifically to platelet glycoprotein VI (GP6) and platelet glycoprotein Ib alpha (GP1BA). It inhibits the interaction between collagen and platelet GP6 by cleaving GP6 (at '225-Glu-|-Ala-226' and '238-Val-|-Phe-239' bonds), and inhibits vWF-induced platelet aggregation by cleaving GP1BA and vWF. Cleavage of GP1BA occurs at two distinct sites to generate two soluble fragments. It also cleaves alpha- (FGA) and subsequently the gamma-chain (FGG) of fibrinogen, leaving the beta-chain unaffected. It also inhibits collagen-, convulxin- and ristocetin-induced platelet aggregation. It blocks the adhesion of platelet to immobilized collagen, but only exerts a slight inhibition to fibrinogen. In vivo, it exerts potent antithrombotic effect. The protein is Snake venom metalloproteinase kistomin of Calloselasma rhodostoma (Malayan pit viper).